The primary structure comprises 255 residues: tRNA (guanine-N(1)-)-methyltransferase (255 aa).

Residues glycine 113 and isoleucine 133–leucine 138 each bind S-adenosyl-L-methionine.

Belongs to the RNA methyltransferase TrmD family. In terms of assembly, homodimer.

It is found in the cytoplasm. The catalysed reaction is guanosine(37) in tRNA + S-adenosyl-L-methionine = N(1)-methylguanosine(37) in tRNA + S-adenosyl-L-homocysteine + H(+). Its function is as follows. Specifically methylates guanosine-37 in various tRNAs. The protein is tRNA (guanine-N(1)-)-methyltransferase of Mannheimia succiniciproducens (strain KCTC 0769BP / MBEL55E).